A 353-amino-acid polypeptide reads, in one-letter code: Phosphoribosylformylglycinamidine cyclo-ligase (353 aa).

The protein belongs to the AIR synthase family.

It localises to the cytoplasm. It carries out the reaction 2-formamido-N(1)-(5-O-phospho-beta-D-ribosyl)acetamidine + ATP = 5-amino-1-(5-phospho-beta-D-ribosyl)imidazole + ADP + phosphate + H(+). Its pathway is purine metabolism; IMP biosynthesis via de novo pathway; 5-amino-1-(5-phospho-D-ribosyl)imidazole from N(2)-formyl-N(1)-(5-phospho-D-ribosyl)glycinamide: step 2/2. This Pseudomonas aeruginosa (strain LESB58) protein is Phosphoribosylformylglycinamidine cyclo-ligase.